Here is a 386-residue protein sequence, read N- to C-terminus: DNA dC-&gt;dU-editing enzyme APOBEC-3D (386 aa).

CMP/dCMP-type deaminase domains lie at 29 to 145 and 187 to 334; these read GRSY…DWRW and DDNY…LCSL. 4 residues coordinate Zn(2+): His78, Cys109, Cys112, and His262. The active-site Proton donor is the Glu264. Zn(2+)-binding residues include Cys293 and Cys296.

This sequence belongs to the cytidine and deoxycytidylate deaminase family. Can form homo- and heterodimers with APOBEC3F and APOBEC3G. Interacts with L1RE1; this interaction inhibits LINE-1 retrotransposition. In terms of assembly, (Microbial infection) Interacts with HIV-1 Vif. This interaction triggers APOBEC3D polyubiquitylation and degradation by the 26S proteasome. Zn(2+) is required as a cofactor. As to expression, expressed in lymphoid organs. Also detected in non-lymphoid tissues including lung.

Its subcellular location is the cytoplasm. The protein localises to the P-body. The catalysed reaction is a 2'-deoxycytidine in single-stranded DNA + H2O + H(+) = a 2'-deoxyuridine in single-stranded DNA + NH4(+). Its activity is regulated as follows. (Microbial infection) Antiviral activity is neutralized by the HIV-1 virion infectivity factor (Vif), that prevents its incorporation into progeny virions by both inhibiting its translation and/or by inducing its ubiquitination and subsequent degradation by the 26S proteasome. Its function is as follows. DNA deaminase (cytidine deaminase) which acts as an inhibitor of retrovirus replication and retrotransposon mobility via deaminase-dependent and -independent mechanisms. Exhibits antiviral activity against HIV-1. After the penetration of retroviral nucleocapsids into target cells of infection and the initiation of reverse transcription, it can induce the conversion of cytosine to uracil in the minus-sense single-strand viral DNA, leading to G-to-A hypermutations in the subsequent plus-strand viral DNA. The resultant detrimental levels of mutations in the proviral genome, along with a deamination-independent mechanism that works prior to the proviral integration, together exert efficient antiretroviral effects in infected target cells. Selectively targets single-stranded DNA and does not deaminate double-stranded DNA or single- or double-stranded RNA. Also inhibits the mobility of LTR and non-LTR retrotransposons. (Microbial infection) Enhances hepatitis B virus/HBV replication by excluding restriction factors APOBEC3F and APOBEC3G from HBV capsids. This Homo sapiens (Human) protein is DNA dC-&gt;dU-editing enzyme APOBEC-3D.